We begin with the raw amino-acid sequence, 83 residues long: Mu-theraphotoxin-Hhn2b 1 (83 aa).

An N-terminal signal peptide occupies residues 1–21 (MKASMFLALAGLVLLFVVCYA). The propeptide occupies 22-48 (SESEEKEFPRELISKIFAVDDFKGEER). 3 cysteine pairs are disulfide-bonded: C50/C65, C57/C70, and C64/C77. L81 is subject to Leucine amide.

The protein belongs to the neurotoxin 10 (Hwtx-1) family. 14 (Hntx-1) subfamily. As to quaternary structure, monomer. Expressed by the venom gland.

It localises to the secreted. In terms of biological role, weakly blocks the rat SCN2A/SCN1B (Nav1.2/beta-1) sodium channel (IC(50)=68 uM) and the insect sodium channel para/tipE (IC(50)=4.3 uM), without altering the activation or inactivation kinetics (depressant toxin). This is Mu-theraphotoxin-Hhn2b 1 from Cyriopagopus hainanus (Chinese bird spider).